The chain runs to 494 residues: Succinoglycan biosynthesis transport protein ExoT (494 aa).

The next 13 helical transmembrane spans lie at 16–36, 44–64, 82–102, 105–125, 157–177, 215–235, 253–273, 297–317, 321–341, 343–363, 384–404, 421–441, and 447–467; these read WSVLSKTGTFGLKFVTVPILA, FGAVAVALTVVQFLAMIGGAG, SVFWANLAIALMMALGLFVFA, LATLLGAPEAAYLLRIMSLLI, LGAVIAVLLALLGFGIWSLLA, FGMMGSEIANFITFQSPMVVI, FASIPNQVVLSAVMGVLFPTF, LLAPMMFGLWALAEPAMLVLF, WAYAWPVLGLLALSKGILTPC, TFIPYLKGVGQGAVLFWWALI, AMIWLCIVNAVTLVGYSWVVF, PMIAALLMALVVRFLLEHFGA, and VLQLIAGTAIGSVIYTVLILL.

Belongs to the polysaccharide synthase family.

The protein localises to the cell membrane. The protein operates within glycan metabolism; exopolysaccharide biosynthesis. In Rhizobium meliloti (strain 1021) (Ensifer meliloti), this protein is Succinoglycan biosynthesis transport protein ExoT (exoT).